A 350-amino-acid chain; its full sequence is Nuclear pore complex-interacting protein family member A3 (350 aa).

The interval 306-325 (KTPPECLLTPLPPSAPPSVD) is disordered.

The protein belongs to the NPIP family.

This is Nuclear pore complex-interacting protein family member A3 (NPIPA3) from Homo sapiens (Human).